We begin with the raw amino-acid sequence, 85 residues long: NAD(P)H-quinone oxidoreductase subunit L (85 aa).

A run of 2 helical transmembrane segments spans residues 17-37 and 54-74; these read IVAV…PGFV and AFMY…SPFL.

The protein belongs to the complex I NdhL subunit family. NDH-1 can be composed of about 15 different subunits; different subcomplexes with different compositions have been identified which probably have different functions.

The protein resides in the cellular thylakoid membrane. It catalyses the reaction a plastoquinone + NADH + (n+1) H(+)(in) = a plastoquinol + NAD(+) + n H(+)(out). The enzyme catalyses a plastoquinone + NADPH + (n+1) H(+)(in) = a plastoquinol + NADP(+) + n H(+)(out). Functionally, NDH-1 shuttles electrons from an unknown electron donor, via FMN and iron-sulfur (Fe-S) centers, to quinones in the respiratory and/or the photosynthetic chain. The immediate electron acceptor for the enzyme in this species is believed to be plastoquinone. Couples the redox reaction to proton translocation, and thus conserves the redox energy in a proton gradient. Cyanobacterial NDH-1 also plays a role in inorganic carbon-concentration. This is NAD(P)H-quinone oxidoreductase subunit L from Crocosphaera subtropica (strain ATCC 51142 / BH68) (Cyanothece sp. (strain ATCC 51142)).